The following is a 514-amino-acid chain: Protein p59 (514 aa).

Its subcellular location is the virion. This chain is Protein p59, found in Lettuce infectious yellows virus (isolate United States/92) (LIYV).